A 213-amino-acid polypeptide reads, in one-letter code: Imidazoleglycerol-phosphate dehydratase (213 aa).

This sequence belongs to the imidazoleglycerol-phosphate dehydratase family.

The protein localises to the cytoplasm. The enzyme catalyses D-erythro-1-(imidazol-4-yl)glycerol 3-phosphate = 3-(imidazol-4-yl)-2-oxopropyl phosphate + H2O. The protein operates within amino-acid biosynthesis; L-histidine biosynthesis; L-histidine from 5-phospho-alpha-D-ribose 1-diphosphate: step 6/9. This is Imidazoleglycerol-phosphate dehydratase from Trichodesmium erythraeum (strain IMS101).